The primary structure comprises 114 residues: UPF0145 protein TT_C1581 (114 aa).

This sequence belongs to the UPF0145 family.

In Thermus thermophilus (strain ATCC BAA-163 / DSM 7039 / HB27), this protein is UPF0145 protein TT_C1581.